The sequence spans 100 residues: Large ribosomal subunit protein uL23 (100 aa).

It belongs to the universal ribosomal protein uL23 family. In terms of assembly, part of the 50S ribosomal subunit. Contacts protein L29, and trigger factor when it is bound to the ribosome.

Its function is as follows. One of the early assembly proteins it binds 23S rRNA. One of the proteins that surrounds the polypeptide exit tunnel on the outside of the ribosome. Forms the main docking site for trigger factor binding to the ribosome. The sequence is that of Large ribosomal subunit protein uL23 from Novosphingobium aromaticivorans (strain ATCC 700278 / DSM 12444 / CCUG 56034 / CIP 105152 / NBRC 16084 / F199).